We begin with the raw amino-acid sequence, 223 residues long: MKTIQIAIDGPASSGKSTVAKIIAKDFGFTYLDTGAMYRAVTYMALKNQLGVEEVEALLALLDQHPISFGRSETGDQLVFVGDVDITHPIRENEVTNHVSAIAAIPQVREKLVSLQQEIAQQGGIVMDGRDIGTVVLPQAELKIFLVASVDERAERRYKENIAKGIETDLETLKKEIAARDYKDSHRETSPLKQAEDAVYLDTTGLNIQEVVEKIKAEAEKRM.

Glycine 10 to threonine 18 contacts ATP.

Belongs to the cytidylate kinase family. Type 1 subfamily.

It localises to the cytoplasm. The catalysed reaction is CMP + ATP = CDP + ADP. It carries out the reaction dCMP + ATP = dCDP + ADP. This is Cytidylate kinase from Streptococcus pneumoniae (strain 70585).